The sequence spans 113 residues: Large ribosomal subunit protein bL17 (113 aa).

The protein belongs to the bacterial ribosomal protein bL17 family. Part of the 50S ribosomal subunit. Contacts protein L32.

In Clostridium beijerinckii (strain ATCC 51743 / NCIMB 8052) (Clostridium acetobutylicum), this protein is Large ribosomal subunit protein bL17.